The following is an 86-amino-acid chain: uncharacterized protein (86 aa).

This sequence to B.subtilis spore coat protein C.

This is an uncharacterized protein from Bacillus subtilis (strain 168).